The primary structure comprises 296 residues: GTPase Era (296 aa).

The Era-type G domain occupies 3–170 (KSGFVTIVGR…KELMFKYIPE (168 aa)). Residues 11-18 (GRPNVGKS) form a G1 region. Residue 11 to 18 (GRPNVGKS) participates in GTP binding. The tract at residues 37 to 41 (QTTRN) is G2. The tract at residues 58 to 61 (DTPG) is G3. GTP contacts are provided by residues 58–62 (DTPGI) and 120–123 (NKID). A G4 region spans residues 120 to 123 (NKID). Residues 149–151 (ISA) are G5. The 78-residue stretch at 201–278 (LSEEVPHGIA…YIRLWVKVKE (78 aa)) folds into the KH type-2 domain.

The protein belongs to the TRAFAC class TrmE-Era-EngA-EngB-Septin-like GTPase superfamily. Era GTPase family. In terms of assembly, monomer.

It localises to the cytoplasm. The protein resides in the cell membrane. Its function is as follows. An essential GTPase that binds both GDP and GTP, with rapid nucleotide exchange. Plays a role in 16S rRNA processing and 30S ribosomal subunit biogenesis and possibly also in cell cycle regulation and energy metabolism. This Clostridium botulinum (strain Okra / Type B1) protein is GTPase Era.